The primary structure comprises 522 residues: Circadian clock oscillator protein KaiC (522 aa).

KaiC domains are found at residues 1 to 248 (MKKS…INIF) and 262 to 522 (ARVS…DDLL). ATP is bound by residues G50, T51, G52, K53, T54, S90, K225, L226, R227, T229, H231, T241, D242, T291, G292, T293, G294, K295, T296, and L297. T54 lines the Mg(2+) pocket. Residue T296 coordinates Mg(2+). E319 lines the Mg(2+) pocket. Residue W332 coordinates ATP. S432 carries the post-translational modification Phosphoserine; by autocatalysis. Residue T433 is modified to Phosphothreonine; by autocatalysis. Positions 452, 458, 459, 460, 462, 464, and 466 each coordinate ATP.

It belongs to the KaiC family. Homohexamer; hexamerization is dependent on ATP-binding. The KaiABC complex composition changes during the circadian cycle to control KaiC phosphorylation. Complexes KaiC(6), KaiA(2-4):KaiC(6), KaiB(6):KaiC(6) and KaiC(6):KaiB(6):KaiA(12) are among the most important forms, many form cooperatively. KaiC interacts with SasA, activating its autokinase function and leading to RpaA activation. It depends on Mg(2+) as a cofactor. In terms of processing, phosphorylated on serine and threonine residues by autocatalysis. Has a 4 step phosphorylation cycle; the autokinase acts first on Thr-433, then Ser-432. When Ser-432 is modified KaiC switches to an autophosphatase mode, acting first on phospho-Thr-433 then phospho-Ser-432.

It carries out the reaction L-seryl-[protein] + ATP = O-phospho-L-seryl-[protein] + ADP + H(+). It catalyses the reaction L-threonyl-[protein] + ATP = O-phospho-L-threonyl-[protein] + ADP + H(+). The catalysed reaction is ATP + H2O = ADP + phosphate + H(+). Its activity is regulated as follows. The interaction with KaiA enhances its phosphorylation status, while the interaction with KaiB decreases it. Central component of the KaiABC oscillator complex, which constitutes the main circadian regulator in cyanobacteria. Complex composition changes during the circadian cycle to control KaiC phosphorylation. KaiA stimulates KaiC autophosphorylation, while KaiB sequesters KaiA, leading to KaiC autodephosphorylation. Clock output pathways impact the RpaA transcriptional regulator. KaiC enhances the autophosphorylation activity of SasA, which then transfers its phosphate group to RpaA to activate it. KaiB and KaiC together enhance the phospho-RpaA dephosphatase activity of CikA. Functionally, has a weak, temperature-independent ATPase activity; ATPase activity defines the circadian period. The phosphorylation state of KaiC modulates its ATPase activity and effects KaiB binding. The sequence is that of Circadian clock oscillator protein KaiC from Acaryochloris marina (strain MBIC 11017).